Here is a 341-residue protein sequence, read N- to C-terminus: Phosphate acyltransferase (341 aa).

This sequence belongs to the PlsX family. Homodimer. Probably interacts with PlsY.

It localises to the cytoplasm. The enzyme catalyses a fatty acyl-[ACP] + phosphate = an acyl phosphate + holo-[ACP]. It participates in lipid metabolism; phospholipid metabolism. Catalyzes the reversible formation of acyl-phosphate (acyl-PO(4)) from acyl-[acyl-carrier-protein] (acyl-ACP). This enzyme utilizes acyl-ACP as fatty acyl donor, but not acyl-CoA. The sequence is that of Phosphate acyltransferase from Photobacterium profundum (strain SS9).